The primary structure comprises 145 residues: Deoxyuridine 5'-triphosphate nucleotidohydrolase (145 aa).

Residues Arg63–Gly65, Gln76, and Thr80–Asp82 each bind substrate.

Belongs to the dUTPase family. It depends on Mg(2+) as a cofactor.

The catalysed reaction is dUTP + H2O = dUMP + diphosphate + H(+). It functions in the pathway pyrimidine metabolism; dUMP biosynthesis; dUMP from dCTP (dUTP route): step 2/2. Its function is as follows. This enzyme is involved in nucleotide metabolism: it produces dUMP, the immediate precursor of thymidine nucleotides and it decreases the intracellular concentration of dUTP so that uracil cannot be incorporated into DNA. The sequence is that of Deoxyuridine 5'-triphosphate nucleotidohydrolase from Chlamydia muridarum (strain MoPn / Nigg).